Reading from the N-terminus, the 397-residue chain is 1-deoxy-D-xylulose 5-phosphate reductoisomerase (397 aa).

Residues threonine 12, glycine 13, serine 14, isoleucine 15, glycine 38, lysine 39, asparagine 40, and asparagine 126 each contribute to the NADPH site. Lysine 127 contacts 1-deoxy-D-xylulose 5-phosphate. Glutamate 128 contacts NADPH. Mn(2+) is bound at residue aspartate 152. Positions 153, 154, 188, and 211 each coordinate 1-deoxy-D-xylulose 5-phosphate. Glutamate 154 lines the Mn(2+) pocket. Residue glycine 217 coordinates NADPH. Positions 224, 229, 230, and 233 each coordinate 1-deoxy-D-xylulose 5-phosphate. Mn(2+) is bound at residue glutamate 233.

It belongs to the DXR family. Mg(2+) serves as cofactor. Mn(2+) is required as a cofactor.

The catalysed reaction is 2-C-methyl-D-erythritol 4-phosphate + NADP(+) = 1-deoxy-D-xylulose 5-phosphate + NADPH + H(+). It participates in isoprenoid biosynthesis; isopentenyl diphosphate biosynthesis via DXP pathway; isopentenyl diphosphate from 1-deoxy-D-xylulose 5-phosphate: step 1/6. Its function is as follows. Catalyzes the NADPH-dependent rearrangement and reduction of 1-deoxy-D-xylulose-5-phosphate (DXP) to 2-C-methyl-D-erythritol 4-phosphate (MEP). This chain is 1-deoxy-D-xylulose 5-phosphate reductoisomerase, found in Haemophilus influenzae (strain 86-028NP).